The primary structure comprises 563 residues: Coiled-coil domain-containing protein 38 (563 aa).

Residues 128–211 (TKKKTIKRFE…SIKSDIAKTE (84 aa)) adopt a coiled-coil conformation. The interval 265-310 (DNSIDSDKMSVSEEWSSRRGSQGGRHGKHTLGQDSRKSSGFTRPES) is disordered. The segment covering 269-281 (DSDKMSVSEEWSS) has biased composition (basic and acidic residues). 2 coiled-coil regions span residues 361 to 415 (QDVD…RSRL) and 454 to 522 (NAVQ…AVAQ). The tract at residues 543–563 (QELLLVSDTRSKSQDEEYFFS) is disordered.

Interacts with CCDC42, CFAP53, IFT88 and ODF2. Interacts with CCDC146. Interacts with TEKT3. Interacts with ubiquitinated histone H2A. In terms of tissue distribution, expressed exclusively in testis where it is detected mainly in spermatogonia and spermatocytes (at protein level).

Its subcellular location is the cytoplasm. The protein localises to the cytoskeleton. The protein resides in the microtubule organizing center. It is found in the centrosome. It localises to the perinuclear region. Its subcellular location is the cell projection. The protein localises to the cilium. The protein resides in the flagellum. Its function is as follows. Essential for male fertility. Required for sperm flagellum biogenesis. Also required for acrosome biogenesis. Required for the attachment of developing acrosomes to the nucleus during spermiogenesis and may be involved in the transport of fibrous sheath components. This is Coiled-coil domain-containing protein 38 (Ccdc38) from Mus musculus (Mouse).